A 447-amino-acid polypeptide reads, in one-letter code: Argininosuccinate synthase (447 aa).

Residues 20–28 and Ala-46 each bind ATP; that span reads AFSGGLDTS. Residue Tyr-102 coordinates L-citrulline. ATP is bound by residues Gly-132 and Thr-134. L-aspartate contacts are provided by Thr-134, Asn-138, and Asp-139. Asn-138 contacts L-citrulline. Asp-139 serves as a coordination point for ATP. Residues Arg-142 and Ser-195 each coordinate L-citrulline. An ATP-binding site is contributed by Asp-197. Thr-204, Glu-206, and Glu-283 together coordinate L-citrulline.

This sequence belongs to the argininosuccinate synthase family. Type 2 subfamily. Homotetramer.

It is found in the cytoplasm. It carries out the reaction L-citrulline + L-aspartate + ATP = 2-(N(omega)-L-arginino)succinate + AMP + diphosphate + H(+). Its pathway is amino-acid biosynthesis; L-arginine biosynthesis; L-arginine from L-ornithine and carbamoyl phosphate: step 2/3. This chain is Argininosuccinate synthase (argG), found in Neisseria meningitidis serogroup A / serotype 4A (strain DSM 15465 / Z2491).